We begin with the raw amino-acid sequence, 255 residues long: Thiazole synthase (255 aa).

Lys-95 serves as the catalytic Schiff-base intermediate with DXP. Residues Gly-156, 182–183 (AG), and 204–205 (NT) each bind 1-deoxy-D-xylulose 5-phosphate.

This sequence belongs to the ThiG family. In terms of assembly, homotetramer. Forms heterodimers with either ThiH or ThiS.

It localises to the cytoplasm. It carries out the reaction [ThiS sulfur-carrier protein]-C-terminal-Gly-aminoethanethioate + 2-iminoacetate + 1-deoxy-D-xylulose 5-phosphate = [ThiS sulfur-carrier protein]-C-terminal Gly-Gly + 2-[(2R,5Z)-2-carboxy-4-methylthiazol-5(2H)-ylidene]ethyl phosphate + 2 H2O + H(+). It functions in the pathway cofactor biosynthesis; thiamine diphosphate biosynthesis. Catalyzes the rearrangement of 1-deoxy-D-xylulose 5-phosphate (DXP) to produce the thiazole phosphate moiety of thiamine. Sulfur is provided by the thiocarboxylate moiety of the carrier protein ThiS. In vitro, sulfur can be provided by H(2)S. The chain is Thiazole synthase from Vibrio parahaemolyticus serotype O3:K6 (strain RIMD 2210633).